The sequence spans 475 residues: Lactate utilization protein B (475 aa).

2 4Fe-4S ferredoxin-type domains span residues 304-334 (GTEF…GHSY) and 353-382 (YDDY…LHEL). [4Fe-4S] cluster contacts are provided by C313, C316, C319, C323, C366, C369, and C373.

The protein belongs to the LutB/YkgF family.

Functionally, is involved in L-lactate degradation and allows cells to grow with lactate as the sole carbon source. Has probably a role as an electron transporter during oxidation of L-lactate. This chain is Lactate utilization protein B, found in Geobacillus sp. (strain WCH70).